Consider the following 213-residue polypeptide: Uridine kinase (213 aa).

Residue 13-20 (GASASGKS) coordinates ATP.

This sequence belongs to the uridine kinase family.

It localises to the cytoplasm. It catalyses the reaction uridine + ATP = UMP + ADP + H(+). It carries out the reaction cytidine + ATP = CMP + ADP + H(+). It participates in pyrimidine metabolism; CTP biosynthesis via salvage pathway; CTP from cytidine: step 1/3. It functions in the pathway pyrimidine metabolism; UMP biosynthesis via salvage pathway; UMP from uridine: step 1/1. The sequence is that of Uridine kinase from Haemophilus influenzae (strain PittGG).